The chain runs to 156 residues: Ribosomal RNA large subunit methyltransferase H (156 aa).

Residues L73, G104, and 123-128 (LSSLTL) each bind S-adenosyl-L-methionine.

It belongs to the RNA methyltransferase RlmH family. Homodimer.

The protein localises to the cytoplasm. It catalyses the reaction pseudouridine(1915) in 23S rRNA + S-adenosyl-L-methionine = N(3)-methylpseudouridine(1915) in 23S rRNA + S-adenosyl-L-homocysteine + H(+). In terms of biological role, specifically methylates the pseudouridine at position 1915 (m3Psi1915) in 23S rRNA. This chain is Ribosomal RNA large subunit methyltransferase H, found in Neisseria meningitidis serogroup A / serotype 4A (strain DSM 15465 / Z2491).